The primary structure comprises 988 residues: Junction-mediating and -regulatory protein (988 aa).

Residues 1 to 126 are interaction with p300/EP300; the sequence is MSFALEETLE…RSTRSLLGDP (126 aa). Residues 51 to 178 are disordered; that stretch reads AQRQRSGSRE…RPAPREAQVS (128 aa). 2 positions are modified to phosphoserine: Ser-115 and Ser-121. Residues 160–175 show a composition bias toward low complexity; sequence AAGAAAAAARPAPREA. Coiled coils occupy residues 324–360, 489–541, and 590–621; these read SELR…ELLD, LQMM…YEVQ, and ASAY…AKKS. Residues 478–567 are interaction with p300/EP300; the sequence is EKLQYAVSKE…SIKRLISEKR (90 aa). Residue Ser-713 is modified to Phosphoserine. Over residues 731-742 the composition is skewed to basic and acidic residues; sequence EEKTEEVGEGRV. 2 disordered regions span residues 731–755 and 800–865; these read EEKT…PQSL and INPL…LFDS. The segment covering 746–755 has biased composition (polar residues); the sequence is PSQTTEPQSL. The segment covering 803 to 827 has biased composition (pro residues); sequence LPSPLPPTPPPPPPPPPPPPPPPLP. A compositionally biased stretch (basic and acidic residues) spans 832–851; sequence SGPETLEKDLPRKEGNEKRI. Residue Ser-888 is modified to Phosphoserine. A WH2 domain is found at 921-938; the sequence is DSNNILAQIRKGVKLKKV. Residues 967 to 988 are disordered; the sequence is IKEASPESEDEEEALPCTDWEN. The span at 972–988 shows a compositional bias: acidic residues; the sequence is PESEDEEEALPCTDWEN. Ser-974 carries the phosphoserine modification.

Belongs to the JMY family. Interacts with p300/EP300, the complex activates p53/TP53 transcriptional activity. Interacts with TTC5; the interaction facilitates the association between JMY and p300/EP300. Interacts with MAP1LC3B; the interaction results in the activation of JYM's nucleation activity in the cytoplasm. Interacts with TTC5/STRAP; the interaction results in the inhibition of JYM's nucleation activity in the cytoplasm due to competition with MAP1LC3B binding. In terms of processing, ubiquitinated by MDM2, leading to its subsequent degradation by the proteasome. In case of DNA damage, the interaction with MDM2 is altered, preventing degradation and allowing interaction with p300/EP300 and its function in p53/TP53 stress response.

It is found in the nucleus. It localises to the cytoplasmic vesicle. The protein localises to the cytoplasm. Its subcellular location is the cytoskeleton. The protein resides in the endomembrane system. It is found in the autophagosome membrane. Acts both as a nuclear p53/TP53-cofactor and a cytoplasmic regulator of actin dynamics depending on conditions. In nucleus, acts as a cofactor that increases p53/TP53 response via its interaction with p300/EP300. Increases p53/TP53-dependent transcription and apoptosis, suggesting an important role in p53/TP53 stress response such as DNA damage. In cytoplasm, acts as a nucleation-promoting factor for both branched and unbranched actin filaments. Activates the Arp2/3 complex to induce branched actin filament networks. Also catalyzes actin polymerization in the absence of Arp2/3, creating unbranched filaments. Contributes to cell motility by controlling actin dynamics. May promote the rapid formation of a branched actin network by first nucleating new mother filaments and then activating Arp2/3 to branch off these filaments. Upon nutrient stress, directly recruited by MAP1LC3B to the phagophore membrane surfaces to promote actin assembly during autophagy. The p53/TP53-cofactor and actin activator activities are regulated via its subcellular location. The chain is Junction-mediating and -regulatory protein (JMY) from Homo sapiens (Human).